The following is a 285-amino-acid chain: Putative hydrolase DDAH2 (285 aa).

Residue histidine 171 is the Proton donor of the active site. The active-site Nucleophile is the cysteine 276.

The protein belongs to the DDAH family. Post-translationally, phosphorylated by TBK1. Phosphorylation inhibits the translocation into the mitochondrion upon Sendai viral infection.

It is found in the cytoplasm. The protein resides in the mitochondrion. Functionally, putative hydrolase with unknown substrate. Does not hydrolyze N(G),N(G)-dimethyl-L-arginine (ADMA) which acts as an inhibitor of NOS. In endothelial cells, induces expression of vascular endothelial growth factor (VEGF) via phosphorylation of the transcription factor SP1 by PKA in a process that is independent of NO and NO synthase. Similarly, enhances pancreatic insulin secretion through SP1-mediated transcriptional up-regulation of secretagogin/SCGN, an insulin vesicle docking protein. Upon viral infection, relocates to mitochondria where it promotes mitochondrial fission through activation of DNM1L leading to the inhibition of innate response activation mediated by MAVS. The chain is Putative hydrolase DDAH2 (DDAH2) from Bos taurus (Bovine).